The following is a 462-amino-acid chain: tRNA modification GTPase MnmE (462 aa).

The (6S)-5-formyl-5,6,7,8-tetrahydrofolate site is built by arginine 27, glutamate 89, and arginine 128. The region spanning 223 to 383 is the TrmE-type G domain; the sequence is GLKIAIVGRP…LEAAILAAVG (161 aa). GTP is bound by residues 233–238, 252–258, and 277–280; these read NVGKSS, TDLPGRT, and DTAG. Mg(2+) is bound by residues serine 237 and threonine 258. Lysine 462 lines the (6S)-5-formyl-5,6,7,8-tetrahydrofolate pocket.

This sequence belongs to the TRAFAC class TrmE-Era-EngA-EngB-Septin-like GTPase superfamily. TrmE GTPase family. In terms of assembly, homodimer. Heterotetramer of two MnmE and two MnmG subunits. The cofactor is K(+).

It localises to the cytoplasm. Functionally, exhibits a very high intrinsic GTPase hydrolysis rate. Involved in the addition of a carboxymethylaminomethyl (cmnm) group at the wobble position (U34) of certain tRNAs, forming tRNA-cmnm(5)s(2)U34. The polypeptide is tRNA modification GTPase MnmE (Synechococcus sp. (strain ATCC 27144 / PCC 6301 / SAUG 1402/1) (Anacystis nidulans)).